Here is a 233-residue protein sequence, read N- to C-terminus: Probable septum site-determining protein MinC (233 aa).

This sequence belongs to the MinC family. As to quaternary structure, interacts with MinD and FtsZ.

In terms of biological role, cell division inhibitor that blocks the formation of polar Z ring septums. Rapidly oscillates between the poles of the cell to destabilize FtsZ filaments that have formed before they mature into polar Z rings. Prevents FtsZ polymerization. The polypeptide is Probable septum site-determining protein MinC (Proteus mirabilis (strain HI4320)).